Reading from the N-terminus, the 258-residue chain is Phosphosulfolactate synthase (258 aa).

It belongs to the phosphosulfolactate synthase family.

It catalyses the reaction (2R)-O-phospho-3-sulfolactate = phosphoenolpyruvate + sulfite + H(+). The protein operates within cofactor biosynthesis; coenzyme M biosynthesis; sulfoacetaldehyde from phosphoenolpyruvate and sulfite: step 1/4. Functionally, catalyzes the addition of sulfite to phosphoenolpyruvate (PEP) to yield (2R)-phospho-3-sulfolactate (PSL). This is Phosphosulfolactate synthase (comA) from Methanothermobacter thermautotrophicus (strain ATCC 29096 / DSM 1053 / JCM 10044 / NBRC 100330 / Delta H) (Methanobacterium thermoautotrophicum).